A 339-amino-acid polypeptide reads, in one-letter code: Protein-glutamate methylesterase/protein-glutamine glutaminase (339 aa).

The region spanning 2–119 is the Response regulatory domain; it reads RIGVVNDMPM…EGNASSQSAR (118 aa). Residue Asp53 is modified to 4-aspartylphosphate. A CheB-type methylesterase domain is found at 149 to 338; sequence PTPRRLIAIG…SRIIEACERS (190 aa). Residues Ser160, His187, and Asp280 contribute to the active site.

It belongs to the CheB family. Post-translationally, phosphorylated by CheA. Phosphorylation of the N-terminal regulatory domain activates the methylesterase activity.

The protein resides in the cytoplasm. The enzyme catalyses [protein]-L-glutamate 5-O-methyl ester + H2O = L-glutamyl-[protein] + methanol + H(+). It carries out the reaction L-glutaminyl-[protein] + H2O = L-glutamyl-[protein] + NH4(+). In terms of biological role, involved in chemotaxis. Part of a chemotaxis signal transduction system that modulates chemotaxis in response to various stimuli. Catalyzes the demethylation of specific methylglutamate residues introduced into the chemoreceptors (methyl-accepting chemotaxis proteins or MCP) by CheR. Also mediates the irreversible deamidation of specific glutamine residues to glutamic acid. The sequence is that of Protein-glutamate methylesterase/protein-glutamine glutaminase from Mesorhizobium japonicum (strain LMG 29417 / CECT 9101 / MAFF 303099) (Mesorhizobium loti (strain MAFF 303099)).